Reading from the N-terminus, the 223-residue chain is Transmembrane protein 235 (223 aa).

Positions 1-28 (MARLGALLLAAALGALLSFALLAAAVAS) are cleaved as a signal peptide. An N-linked (GlcNAc...) asparagine glycan is attached at N41. 3 helical membrane-spanning segments follow: residues 96–116 (VIVVLPLSLVLLVCGWICGLL), 126–146 (LLFTGCYFLLGSVLTLAGVSI), and 176–196 (WSMALAWGSCALEAFSGTLLL).

The protein belongs to the PMP-22/EMP/MP20 family. N-glycosylated.

It localises to the membrane. It is found in the endoplasmic reticulum. The chain is Transmembrane protein 235 (TMEM235) from Homo sapiens (Human).